The primary structure comprises 218 residues: Large ribosomal subunit protein uL3 (218 aa).

Residues 124–162 (KRHGFSRGPMTHGSKNHREPGSTGAGTTPGRIYPGKRMA) are disordered.

The protein belongs to the universal ribosomal protein uL3 family. In terms of assembly, part of the 50S ribosomal subunit. Forms a cluster with proteins L14 and L19.

Its function is as follows. One of the primary rRNA binding proteins, it binds directly near the 3'-end of the 23S rRNA, where it nucleates assembly of the 50S subunit. In Synechococcus sp. (strain CC9605), this protein is Large ribosomal subunit protein uL3.